Consider the following 153-residue polypeptide: Membrane-spanning 4-domains subfamily A member 13 (153 aa).

4 consecutive transmembrane segments (helical) span residues 1–21 (MTGI…MGQI), 36–56 (GCSL…RATW), 71–91 (ILCM…LSTF), and 111–131 (VLLS…IFGC).

It belongs to the MS4A family.

The protein resides in the membrane. In terms of biological role, may be involved in signal transduction as a component of a multimeric receptor complex. This is Membrane-spanning 4-domains subfamily A member 13 (MS4A13) from Bos taurus (Bovine).